We begin with the raw amino-acid sequence, 509 residues long: Putative cytochrome P450 CYP13A8 (509 aa).

A heme-binding site is contributed by Cys-455.

This sequence belongs to the cytochrome P450 family. Requires heme as cofactor.

In terms of biological role, cytochromes P450 are a group of heme-thiolate monooxygenases. They oxidize a variety of structurally unrelated compounds, including steroids, fatty acids, and xenobiotics. The sequence is that of Putative cytochrome P450 CYP13A8 (cyp-13A8) from Caenorhabditis elegans.